The primary structure comprises 494 residues: MDLQRTLMFSCWVLSLLIIKTTAYNEKQLFQPLETENANAMTAVMERGLKTQRRPEHKNAYATMMYMGTPRDYEFYVATRVLIRSLKSLHVDADIVVIASLDVPINWIHALEEEDGAKVVRVENLENPYKKQTNFDNRFKLSLNKLYAWSLSDYDRVVMLDVDNLFLKNTDELFQCGQFCAVFINPCIFHTGLFVLQPSMEVFRDMLHELEVKRDNPDGADQGFLVSYFSDLLNQPLFRPPPDNRTALKGHFRLPLGYQMDASYYYLKLRWNVPCGPNSVITFPGAVWLKPWYWWSWPVLPLGLSWHHQRRYTISYSAEMPWVLTQAVFYLGIILVTRLARPNMTKLCYRRSDKNLSMIQTAFKFVALLFILSAYIIPFFIIPQTIHPLIGWSLYLTGSFALSTIPINAFLLPILPVITPWLGIFGTLLVMAFPSYPDGVVRALSVFGYAFCCAPFLWVSFVKITSHLQIMIDKEVLFPRLGESGVTSGLSKLY.

Residues 4-24 traverse the membrane as a helical segment; sequence QRTLMFSCWVLSLLIIKTTAY. Residues aspartate 161 and aspartate 163 each contribute to the Mn(2+) site. 5 helical membrane-spanning segments follow: residues 316–336, 362–382, 389–409, 410–430, and 444–464; these read YSAE…IILV, AFKF…FFII, LIGW…PINA, FLLP…TLLV, and LSVF…FVKI.

Belongs to the glycosyltransferase 8 family. Glycogenin subfamily. The cofactor is Mn(2+).

The protein localises to the membrane. The chain is Putative glucuronosyltransferase PGSIP7 (PGSIP7) from Arabidopsis thaliana (Mouse-ear cress).